We begin with the raw amino-acid sequence, 699 residues long: Sarcoplasmic reticulum histidine-rich calcium-binding protein (699 aa).

The signal sequence occupies residues Met-1–Gln-28. The segment at Ser-50–Val-95 is disordered. The span at Ala-55–Glu-89 shows a compositional bias: basic and acidic residues. Residue Thr-76 is modified to Phosphothreonine; by FAM20C. 10 tandem repeats follow at residues His-106–Glu-121, His-134–Ser-154, His-155–Ile-177, His-180–Ala-213, His-214–Ser-237, His-238–Ala-270, His-271–Ser-294, His-295–Ala-318, His-319–Asp-342, and His-343–Gly-365. The tract at residues His-106–Asp-342 is 6 X approximate tandem repeats. The 4 X tandem repeats, acidic stretch occupies residues His-106–Gly-365. Phosphoserine; by FAM20C is present on residues Ser-119 and Ser-145. The disordered stretch occupies residues His-127–Glu-617. Composition is skewed to basic residues over residues His-148–His-158 and His-173–Arg-183. Acidic residues predominate over residues Gly-187–Ser-206. Basic residues predominate over residues His-231 to Gln-241. Over residues Glu-244–Ser-263 the composition is skewed to acidic residues. Residues His-288–Arg-298 show a composition bias toward basic residues. Positions Glu-302–Ser-311 are enriched in acidic residues. Over residues His-324–Glu-335 the composition is skewed to basic and acidic residues. Ser-333 carries the post-translational modification Phosphoserine. A compositionally biased stretch (basic residues) spans His-336–Gly-347. Phosphoserine; by FAM20C occurs at positions 358 and 431. Basic and acidic residues-rich tracts occupy residues Ser-444–His-463 and Val-470–Asp-481. Ser-494 carries the phosphoserine; by FAM20C modification. Over residues Gln-504–Asp-515 the composition is skewed to basic and acidic residues. Composition is skewed to acidic residues over residues Gln-532–Arg-551 and Ser-567–Glu-581. Position 567 is a phosphoserine; by FAM20C (Ser-567). Positions Cys-627–Cys-673 are metal-binding.

The protein belongs to the HRC family.

Its subcellular location is the sarcoplasmic reticulum lumen. Its function is as follows. May play a role in the regulation of calcium sequestration or release in the SR of skeletal and cardiac muscle. This chain is Sarcoplasmic reticulum histidine-rich calcium-binding protein (HRC), found in Homo sapiens (Human).